Reading from the N-terminus, the 309-residue chain is Porphobilinogen deaminase (309 aa).

The residue at position 243 (Cys-243) is an S-(dipyrrolylmethanemethyl)cysteine.

Belongs to the HMBS family. As to quaternary structure, monomer. Dipyrromethane is required as a cofactor.

The enzyme catalyses 4 porphobilinogen + H2O = hydroxymethylbilane + 4 NH4(+). The protein operates within porphyrin-containing compound metabolism; protoporphyrin-IX biosynthesis; coproporphyrinogen-III from 5-aminolevulinate: step 2/4. Tetrapolymerization of the monopyrrole PBG into the hydroxymethylbilane pre-uroporphyrinogen in several discrete steps. The chain is Porphobilinogen deaminase (hemC) from Deinococcus radiodurans (strain ATCC 13939 / DSM 20539 / JCM 16871 / CCUG 27074 / LMG 4051 / NBRC 15346 / NCIMB 9279 / VKM B-1422 / R1).